The following is a 61-amino-acid chain: U-poneritoxin(01)-Om5b (61 aa).

The signal sequence occupies residues 1 to 23 (MKLSALSLAFAIILMMTIMYTKA). Positions 24–41 (DADASADAEADADAEAEA) are excised as a propeptide. At Q59 the chain carries Glutamine amide.

It belongs to the formicidae venom precursor-01 superfamily. In terms of processing, truncated sequences of this peptide have also been found in the venom. It is possible they have been cleaved in the venom. Expressed by the venom gland.

The protein localises to the secreted. In terms of biological role, acidic peptide with potent hemolytic activities. It also shows low antimicrobial activities against E.coli (MIC=50uM), as well as histamine-releasing activity (28.3% at 10 uM). Does not have activity against S.aureus, and S.cerevisiae. This is U-poneritoxin(01)-Om5b from Odontomachus monticola (Trap-jaw ant).